The chain runs to 395 residues: uncharacterized protein (395 aa).

Disordered regions lie at residues 1 to 121 (MLLP…TANS), 136 to 187 (MRMK…LDRN), 308 to 335 (QNNEDTIRKSVPPSREPGSKMMTVSKDE), and 365 to 395 (IQKFRKKYQKQLKKSQEEKKDDTKTAKNEGD). A compositionally biased stretch (basic and acidic residues) spans 13-28 (PKGEAKSLVARERKSQ). Over residues 64–73 (KSAKLRRKKS) the composition is skewed to basic residues. Residues 97–111 (SIEKKKEEMTSKLPE) are compositionally biased toward basic and acidic residues. The span at 144 to 164 (TSRMATKSDSSLETMPESSHN) shows a compositional bias: polar residues. Basic residues predominate over residues 170–179 (KSRKSQRTRG). The segment covering 365-377 (IQKFRKKYQKQLK) has biased composition (basic residues). The segment covering 378 to 395 (KSQEEKKDDTKTAKNEGD) has biased composition (basic and acidic residues).

This is an uncharacterized protein from Caenorhabditis elegans.